A 59-amino-acid polypeptide reads, in one-letter code: Large ribosomal subunit protein bL32c (59 aa).

Over residues 1 to 19 (MAVPKKRTSKAKKNARKAN) the composition is skewed to basic residues. Positions 1–24 (MAVPKKRTSKAKKNARKANWKNQA) are disordered.

This sequence belongs to the bacterial ribosomal protein bL32 family.

The protein resides in the plastid. It localises to the chloroplast. The sequence is that of Large ribosomal subunit protein bL32c (rpl32) from Porphyra purpurea (Red seaweed).